A 305-amino-acid chain; its full sequence is uncharacterized protein (305 aa).

A run of 10 helical transmembrane segments spans residues 4-24 (LNIYIMLLGFSIFTGATFNLA), 38-58 (AWRFGLAAAVMLIILIFTEGI), 67-87 (AVSYIVLGIIGIFGFNALFFV), 95-115 (VNGALIMGLNPLLTAILARII), 125-145 (VLGIFFAFIGVLLVITQGSIE), 152-172 (ISGGDLIIFTGNVCWALYGVL), 183-203 (LSTTTYTMVIGAVSLIVVSLF), 215-235 (IGVWGAIAFMAFFTSVLGYLW), 250-270 (LFFNLVPVVTMIISFAVGTPI), and 272-292 (VFQVIGAVLVILGVLTASGVI). 2 consecutive EamA domains span residues 15–140 (IFTG…LVIT) and 164–290 (VCWA…TASG).

It belongs to the EamA transporter family.

The protein localises to the cell membrane. This is an uncharacterized protein from Bacillus subtilis (strain 168).